The sequence spans 333 residues: Chemokine XC receptor 1 (333 aa).

Topologically, residues 1–31 are extracellular; that stretch reads MESSGNPESTTFFYYDLQSQPCENQAWVFAT. Residues 32–59 form a helical membrane-spanning segment; it reads LATTVLYCLVFLLSLVGNSLVLWVLVKY. Over 60–69 the chain is Cytoplasmic; sequence ESLESLTNIF. A helical membrane pass occupies residues 70-89; that stretch reads ILNLCLSDLVFACLLPVWIS. Residues 90–103 lie on the Extracellular side of the membrane; the sequence is PYHWGWVLGDFLCK. C102 and C175 are joined by a disulfide. The chain crosses the membrane as a helical span at residues 104-125; sequence LLNMIFSISLYSSIFFLTIMTI. Over 126 to 142 the chain is Cytoplasmic; the sequence is HRYLSVVSPLSTLRVPT. Residues 143–167 traverse the membrane as a helical segment; sequence LRCRVLVTMAVWVASILSSILDTIF. Over 168–190 the chain is Extracellular; it reads HKVLSSGCDYSELTWYLTSVYQH. A helical transmembrane segment spans residues 191–209; that stretch reads NLFFLLSLGIILFCYVEIL. The Cytoplasmic segment spans residues 210–225; sequence RTLFRSRSKRRHRTVK. Residues 226–250 traverse the membrane as a helical segment; the sequence is LIFAIVVAYFLSWGPYNFTLFLQTL. The Extracellular segment spans residues 251 to 267; that stretch reads FRTQIIRSCEAKQQLEY. The helical transmembrane segment at 268 to 291 threads the bilayer; it reads ALLICRNLAFSHCCFNPVLYVFVG. The Cytoplasmic segment spans residues 292-333; that stretch reads VKFRTHLKHVLRQFWFCRLQAPSPASIPHSPGAFAYEGASFY.

It belongs to the G-protein coupled receptor 1 family.

It localises to the cell membrane. Receptor for chemokines SCYC1 and SCYC2. Subsequently transduces a signal by increasing the intracellular calcium ions level. Receptor for XCL1/Lymphotactin. The protein is Chemokine XC receptor 1 (XCR1) of Homo sapiens (Human).